A 149-amino-acid chain; its full sequence is Hordoindoline-A (149 aa).

The first 19 residues, 1-19 (MKALFLMGLLALVASAAFA), serve as a signal peptide directing secretion. Positions 20-28 (QYGEVVGSY) are excised as a propeptide. The propeptide at 148 to 149 (YW) is removed in mature form.

Post-translationally, five disulfide bonds are present. Found in endosperm and aleurone layer of developing kernels, but not in the embryo.

It is found in the membrane. Its subcellular location is the secreted. The protein resides in the extracellular space. Its function is as follows. Acts as a membranotoxin, probably through its antibacterial and antifungal activities, contributing to the defense mechanism of the plant against predators. Forms monovalent cation-selective ion channels in membranes. Contributes to grain texture and hardness. In Hordeum vulgare (Barley), this protein is Hordoindoline-A (HINA).